We begin with the raw amino-acid sequence, 518 residues long: Cytochrome P450 monooxygenase COX1 (518 aa).

The helical transmembrane segment at 7–25 (VLIALSSIVVAYFVKTALA) threads the bilayer. Residues Asn48, Asn100, Asn292, Asn302, and Asn351 are each glycosylated (N-linked (GlcNAc...) asparagine). Position 450 (Cys450) interacts with heme. Asn457 is a glycosylation site (N-linked (GlcNAc...) asparagine).

It belongs to the cytochrome P450 family. The cofactor is heme.

Its subcellular location is the membrane. It participates in secondary metabolite biosynthesis. Its function is as follows. Cytochrome P450 monooxygenase; part of the gene cluster that mediates the biosynthesis of alpha-cuprenene and oxidized derivatives. The alpha-cuprenene synthase COP6 is the only sesquiterpene synthase identified in C.cinereus that appears to be part of a biosynthetic gene cluster and is highly specific since it catalyzes the cyclization of (2E,6E)-farnesyl diphosphate into only one product, alpha-cuprenene. The cytochrome P450 monooxygenase COX2 then oxidizes the cyclohexadiene ring of alpha-cuprenene at positions 1 and 4, yielding first alpha-cuparene, followed by alpha-cuparophenol and a further yet unidentified compound resulting from one additional oxidation step. The cytochrome P450 monooxygenase COX1 then likely catalyzes the oxidation at position 9 of the pentane ring of alpha-cuprenene to give the corresponding hydroxy or ketone derivatives. The protein is Cytochrome P450 monooxygenase COX1 of Coprinopsis cinerea (strain Okayama-7 / 130 / ATCC MYA-4618 / FGSC 9003) (Inky cap fungus).